Here is a 294-residue protein sequence, read N- to C-terminus: 4-hydroxy-tetrahydrodipicolinate synthase (294 aa).

A pyruvate-binding site is contributed by threonine 44. The Proton donor/acceptor role is filled by tyrosine 132. The Schiff-base intermediate with substrate role is filled by lysine 160. Valine 202 contacts pyruvate.

This sequence belongs to the DapA family. As to quaternary structure, homotetramer; dimer of dimers.

Its subcellular location is the cytoplasm. The enzyme catalyses L-aspartate 4-semialdehyde + pyruvate = (2S,4S)-4-hydroxy-2,3,4,5-tetrahydrodipicolinate + H2O + H(+). Its pathway is amino-acid biosynthesis; L-lysine biosynthesis via DAP pathway; (S)-tetrahydrodipicolinate from L-aspartate: step 3/4. Its function is as follows. Catalyzes the condensation of (S)-aspartate-beta-semialdehyde [(S)-ASA] and pyruvate to 4-hydroxy-tetrahydrodipicolinate (HTPA). The protein is 4-hydroxy-tetrahydrodipicolinate synthase of Leptospira biflexa serovar Patoc (strain Patoc 1 / Ames).